Consider the following 302-residue polypeptide: Nucleotide-binding protein Bmul_0520/BMULJ_02739 (302 aa).

8-15 (GISGSGKS) lines the ATP pocket. 57-60 (DARS) contributes to the GTP binding site.

This sequence belongs to the RapZ-like family.

Functionally, displays ATPase and GTPase activities. In Burkholderia multivorans (strain ATCC 17616 / 249), this protein is Nucleotide-binding protein Bmul_0520/BMULJ_02739.